Here is a 215-residue protein sequence, read N- to C-terminus: Fanconi anemia core complex-associated protein 24 (215 aa).

Belongs to the multisubunit FA complex composed of FANCA, FANCB, FANCC, FANCE, FANCF, FANCG, FANCL/PHF9, FANCM and FAAP24. Interacts with FANCM.

It is found in the nucleus. In terms of biological role, plays a role in DNA repair through recruitment of the FA core complex to damaged DNA. Regulates FANCD2 monoubiquitination upon DNA damage. Induces chromosomal instability as well as hypersensitivity to DNA cross-linking agents, when repressed. Targets FANCM/FAAP24 complex to the DNA, preferentially to single strand DNA. The chain is Fanconi anemia core complex-associated protein 24 from Bos taurus (Bovine).